The sequence spans 137 residues: Large ribosomal subunit protein uL16 (137 aa).

It belongs to the universal ribosomal protein uL16 family. Part of the 50S ribosomal subunit.

Functionally, binds 23S rRNA and is also seen to make contacts with the A and possibly P site tRNAs. In Stenotrophomonas maltophilia (strain K279a), this protein is Large ribosomal subunit protein uL16.